A 489-amino-acid polypeptide reads, in one-letter code: Aklavinone 12-hydroxylase DnrF (489 aa).

Residues 17 to 18 (LG), E37, Q121, and L145 each bind FAD. Y224 (proton acceptor) is an active-site residue. D308 serves as a coordination point for FAD. Residue G317 participates in aklavinone binding. Residues 402–428 (VAAEDDDPEPTEDPRRPSGRPGFRAPH) form a disordered region.

Belongs to the PheA/TfdB FAD monooxygenase family. In terms of assembly, monomer. FAD serves as cofactor.

It carries out the reaction aklavinone + NADPH + O2 + H(+) = epsilon-rhodomycinone + NADP(+) + H2O. Its pathway is antibiotic biosynthesis; daunorubicin biosynthesis. The protein operates within antibiotic biosynthesis; carminomycin biosynthesis. It functions in the pathway antibiotic biosynthesis; rhodomycin biosynthesis. It participates in antibiotic biosynthesis; doxorubicin biosynthesis. In terms of biological role, involved in the biosynthesis of the anthracyclines carminomycin, rhodomycin, daunorubicin (daunomycin) and doxorubicin (adriamycin) which are aromatic polyketide antibiotics that exhibit high cytotoxicity and are widely applied in the chemotherapy of a variety of cancers. Catalyzes the incorporation of a hydroxyl group at position C-11 of aklavinone, resulting in epsilon-rhodomycinone. The chain is Aklavinone 12-hydroxylase DnrF (dnrF) from Streptomyces peucetius subsp. caesius.